The primary structure comprises 190 residues: RING finger protein 227 (190 aa).

Residues 18–81 form an RING-type zinc finger; the sequence is CNICYRPFNL…RRVVTCPFCR (64 aa). Residues 111-145 form a disordered region; the sequence is KCERDEAGNPAKESSDADGEAEEEGESEKGAGPRS. The segment covering 126–136 has biased composition (acidic residues); the sequence is DADGEAEEEGE.

The sequence is that of RING finger protein 227 from Homo sapiens (Human).